A 206-amino-acid polypeptide reads, in one-letter code: Large ribosomal subunit protein uL4 (206 aa).

Residues 46–77 are disordered; that stretch reads GTRAQKDREQVRHSTKKPFKQKGTGRARAGMT. Over residues 58-70 the composition is skewed to basic residues; that stretch reads HSTKKPFKQKGTG.

The protein belongs to the universal ribosomal protein uL4 family. In terms of assembly, part of the 50S ribosomal subunit.

Functionally, one of the primary rRNA binding proteins, this protein initially binds near the 5'-end of the 23S rRNA. It is important during the early stages of 50S assembly. It makes multiple contacts with different domains of the 23S rRNA in the assembled 50S subunit and ribosome. In terms of biological role, forms part of the polypeptide exit tunnel. The protein is Large ribosomal subunit protein uL4 of Polaromonas sp. (strain JS666 / ATCC BAA-500).